We begin with the raw amino-acid sequence, 257 residues long: Large ribosomal subunit protein eL8z (257 aa).

The protein belongs to the eukaryotic ribosomal protein eL8 family.

The sequence is that of Large ribosomal subunit protein eL8z (RPL7AA) from Arabidopsis thaliana (Mouse-ear cress).